Reading from the N-terminus, the 163-residue chain is Probable ribosome biogenesis protein RLP24 (163 aa).

The protein belongs to the eukaryotic ribosomal protein eL24 family. As to quaternary structure, associated with nucleolar and cytoplasmic pre-60S particles. At the end of biogenesis it dissociates from cytoplasmic pre-60S particles and is likely to be exchanged for its ribosomal homolog, RPL24.

It localises to the nucleus. The protein resides in the nucleolus. Its function is as follows. Involved in the biogenesis of the 60S ribosomal subunit. Ensures the docking of GTPBP4/NOG1 to pre-60S particles. In Bos taurus (Bovine), this protein is Probable ribosome biogenesis protein RLP24 (RSL24D1).